A 314-amino-acid polypeptide reads, in one-letter code: DNA-directed RNA polymerase subunit alpha (314 aa).

The tract at residues 1–228 is alpha N-terminal domain (alpha-NTD); sequence MIEIEKPVIE…EHLNIFVGLT (228 aa). Residues 245 to 314 are alpha C-terminal domain (alpha-CTD); that stretch reads KEKVLEMTIE…ELGLGLRKEE (70 aa).

This sequence belongs to the RNA polymerase alpha chain family. Homodimer. The RNAP catalytic core consists of 2 alpha, 1 beta, 1 beta' and 1 omega subunit. When a sigma factor is associated with the core the holoenzyme is formed, which can initiate transcription.

The enzyme catalyses RNA(n) + a ribonucleoside 5'-triphosphate = RNA(n+1) + diphosphate. DNA-dependent RNA polymerase catalyzes the transcription of DNA into RNA using the four ribonucleoside triphosphates as substrates. This is DNA-directed RNA polymerase subunit alpha from Halalkalibacterium halodurans (strain ATCC BAA-125 / DSM 18197 / FERM 7344 / JCM 9153 / C-125) (Bacillus halodurans).